The primary structure comprises 395 residues: Probable peptidoglycan glycosyltransferase FtsW (395 aa).

At 1-24 the chain is on the cytoplasmic side; that stretch reads MADLAAGVAERGPRLSLWSSLDQR. A helical transmembrane segment spans residues 25 to 45; sequence LVWVVAATALLGLVMVASASI. The Periplasmic portion of the chain corresponds to 46–62; sequence SMAEQATGDPFYFFKRQ. A helical transmembrane segment spans residues 63–83; sequence IFFALLGLGMALALLQIPLAT. Over 84 to 86 the chain is Cytoplasmic; it reads WER. A helical transmembrane segment spans residues 87–107; it reads AGPGLLLGALALLVLVLIPGV. The Periplasmic portion of the chain corresponds to 108–116; that stretch reads GREVNGAVR. The chain crosses the membrane as a helical span at residues 117–137; that stretch reads WIPLGVFNLQVAEVVKVLLAL. Residues 138–152 lie on the Cytoplasmic side of the membrane; sequence YLAGFLVRRQQQLRT. The chain crosses the membrane as a helical span at residues 153–173; sequence SMAAFLVPVLVSAACAFLLLL. Over 174–178 the chain is Periplasmic; the sequence is QPDFG. The chain crosses the membrane as a helical span at residues 179–199; it reads TALMLMALAVGLLYLAGAPLW. Residue Arg-200 is a topological domain, cytoplasmic. The helical transmembrane segment at 201–221 threads the bilayer; it reads FAALVGVLAAAAAALVVYSPY. The Periplasmic segment spans residues 222–276; it reads RWQRVTAFMDPWSDPFNTGFQLTQSLIAIGRGDWLGVGLGGSVQKLFYLPEAHTD. A helical transmembrane segment spans residues 277 to 297; it reads FVFSVLAEELGWLGVLAVVLL. The Cytoplasmic segment spans residues 298–316; that stretch reads FSYIVWRAMAVGWQCHRHR. A helical membrane pass occupies residues 317–337; it reads LPFAGYLAWAVGLALGLQAFI. Over 338–352 the chain is Periplasmic; that stretch reads NMGVATGLLPTKGLT. Residues 353–373 traverse the membrane as a helical segment; the sequence is LPLFSYGGSSALATGAMVGLL. The Cytoplasmic segment spans residues 374-395; sequence LRCGYELAQARAEGRRPEEAAS.

It belongs to the SEDS family. FtsW subfamily.

It localises to the cell inner membrane. It carries out the reaction [GlcNAc-(1-&gt;4)-Mur2Ac(oyl-L-Ala-gamma-D-Glu-L-Lys-D-Ala-D-Ala)](n)-di-trans,octa-cis-undecaprenyl diphosphate + beta-D-GlcNAc-(1-&gt;4)-Mur2Ac(oyl-L-Ala-gamma-D-Glu-L-Lys-D-Ala-D-Ala)-di-trans,octa-cis-undecaprenyl diphosphate = [GlcNAc-(1-&gt;4)-Mur2Ac(oyl-L-Ala-gamma-D-Glu-L-Lys-D-Ala-D-Ala)](n+1)-di-trans,octa-cis-undecaprenyl diphosphate + di-trans,octa-cis-undecaprenyl diphosphate + H(+). Its pathway is cell wall biogenesis; peptidoglycan biosynthesis. Peptidoglycan polymerase that is essential for cell division. The protein is Probable peptidoglycan glycosyltransferase FtsW of Halorhodospira halophila (strain DSM 244 / SL1) (Ectothiorhodospira halophila (strain DSM 244 / SL1)).